The chain runs to 437 residues: UDP-N-acetylmuramate--L-alanine ligase (437 aa).

114–120 (GTHGKTS) contributes to the ATP binding site.

This sequence belongs to the MurCDEF family.

It localises to the cytoplasm. The enzyme catalyses UDP-N-acetyl-alpha-D-muramate + L-alanine + ATP = UDP-N-acetyl-alpha-D-muramoyl-L-alanine + ADP + phosphate + H(+). It functions in the pathway cell wall biogenesis; peptidoglycan biosynthesis. Cell wall formation. In Lactobacillus helveticus (strain DPC 4571), this protein is UDP-N-acetylmuramate--L-alanine ligase.